The following is a 260-amino-acid chain: Acetylglutamate kinase (260 aa).

Residues 45-46 (GG), arginine 67, and asparagine 159 contribute to the substrate site.

Belongs to the acetylglutamate kinase family. ArgB subfamily.

The protein resides in the cytoplasm. It catalyses the reaction N-acetyl-L-glutamate + ATP = N-acetyl-L-glutamyl 5-phosphate + ADP. It functions in the pathway amino-acid biosynthesis; L-arginine biosynthesis; N(2)-acetyl-L-ornithine from L-glutamate: step 2/4. Catalyzes the ATP-dependent phosphorylation of N-acetyl-L-glutamate. In Aliivibrio fischeri (strain ATCC 700601 / ES114) (Vibrio fischeri), this protein is Acetylglutamate kinase.